A 362-amino-acid polypeptide reads, in one-letter code: Leucoanthocyanidin dioxygenase (362 aa).

Positions 211-313 (MEELLLQKKI…RISWAVFCEP (103 aa)) constitute a Fe2OG dioxygenase domain. Fe cation-binding residues include histidine 238, aspartate 240, and histidine 294.

This sequence belongs to the iron/ascorbate-dependent oxidoreductase family. It depends on Fe cation as a cofactor. The cofactor is L-ascorbate.

It carries out the reaction a (2R,3S,4S)-leucoanthocyanidin + 2-oxoglutarate + O2 = a 4-H-anthocyanidin with a 3-hydroxy group + succinate + CO2 + 2 H2O. Its pathway is pigment biosynthesis; anthocyanin biosynthesis. In terms of biological role, oxidation of leucoanthocyanidins into anthocyanidins. This chain is Leucoanthocyanidin dioxygenase, found in Vitis vinifera (Grape).